Consider the following 428-residue polypeptide: uncharacterized protein (428 aa).

Residues 1–49 form a disordered region; the sequence is MRTQTFPPSSSSSRTTHPKKNRHSSNSSSMALVTPAKSSTGAAPKQSSQ. Residues 24–49 show a composition bias toward polar residues; it reads SSNSSSMALVTPAKSSTGAAPKQSSQ.

This is an uncharacterized protein from Caenorhabditis elegans.